An 842-amino-acid chain; its full sequence is Protein P (842 aa).

The terminal protein domain (TP) stretch occupies residues 1 to 177; sequence MPLSYQHFRR…FCGSPYSWEQ (177 aa). Positions 178–345 are spacer; it reads ELHHGAFLDG…YCLTHLVNLL (168 aa). Residues 205-271 are disordered; sequence SRPPVGSSIQ…RHAKNIASRP (67 aa). Residues 223–239 show a composition bias toward polar residues; sequence GPQSQQRPLDGSQQGRS. A polymerase/reverse transcriptase domain (RT) region spans residues 346 to 689; that stretch reads EDWGPCTEHG…YLNLYPVARQ (344 aa). The Reverse transcriptase domain occupies 356-599; it reads KHHIRIPRTP…YSLNFMGYVI (244 aa). Mg(2+) contacts are provided by Asp-428, Asp-550, and Asp-551.

This sequence belongs to the hepadnaviridae P protein family.

It catalyses the reaction DNA(n) + a 2'-deoxyribonucleoside 5'-triphosphate = DNA(n+1) + diphosphate. The enzyme catalyses Endonucleolytic cleavage to 5'-phosphomonoester.. Activated by host HSP70 and HSP40 in vitro to be able to bind the epsilon loop of the pgRNA. Because deletion of the RNase H region renders the protein partly chaperone-independent, the chaperones may be needed indirectly to relieve occlusion of the RNA-binding site by this domain. Inhibited by several reverse-transcriptase inhibitors: Lamivudine, Adefovir and Entecavir. Its function is as follows. Multifunctional enzyme that converts the viral RNA genome into dsDNA in viral cytoplasmic capsids. This enzyme displays a DNA polymerase activity that can copy either DNA or RNA templates, and a ribonuclease H (RNase H) activity that cleaves the RNA strand of RNA-DNA heteroduplexes in a partially processive 3'- to 5'-endonucleasic mode. Neo-synthesized pregenomic RNA (pgRNA) are encapsidated together with the P protein, and reverse-transcribed inside the nucleocapsid. Initiation of reverse-transcription occurs first by binding the epsilon loop on the pgRNA genome, and is initiated by protein priming, thereby the 5'-end of (-)DNA is covalently linked to P protein. Partial (+)DNA is synthesized from the (-)DNA template and generates the relaxed circular DNA (RC-DNA) genome. After budding and infection, the RC-DNA migrates in the nucleus, and is converted into a plasmid-like covalently closed circular DNA (cccDNA). The activity of P protein does not seem to be necessary for cccDNA generation, and is presumably released from (+)DNA by host nuclear DNA repair machinery. This is Protein P from Hepatitis B virus genotype E subtype ayw4 (isolate Kou) (HBV-E).